The following is a 313-amino-acid chain: Olfactory receptor 1M1 (313 aa).

Over 1–25 (MEPRNQTSASQFILLGLSEKPEQET) the chain is Extracellular. Asparagine 5 is a glycosylation site (N-linked (GlcNAc...) asparagine). A helical transmembrane segment spans residues 26–49 (LLFSLFFCMYLVMVVGNLLIILAI). Topologically, residues 50 to 57 (SIDSHLHT) are cytoplasmic. Residues 58 to 79 (PMYFFLANLSLVDFCLATNTIP) form a helical membrane-spanning segment. Residues 80–100 (KMLVSLQTGSKAISYPCCLIQ) lie on the Extracellular side of the membrane. Cysteines 97 and 189 form a disulfide. Residues 101–120 (MYFFHFFGIVDSVIIAMMAY) form a helical membrane-spanning segment. Residues 121–139 (DRFVAICHPLHYAKIMSLR) lie on the Cytoplasmic side of the membrane. Residues 140–158 (LCRLLVGALWAFSCFISLT) form a helical membrane-spanning segment. Over 159 to 196 (HILLMARLVFCGSHEVPHYFCDLTPILRLSCTDTSVNR) the chain is Extracellular. Residues 197–219 (IFILIVAGMVIATPFVCILASYA) traverse the membrane as a helical segment. Topologically, residues 220–236 (RILVAIMKVPSAGGRKK) are cytoplasmic. Residues 237–259 (AFSTCSSHLSVVALFYGTTIGVY) form a helical membrane-spanning segment. Over 260-272 (LCPSSVLTTVKEK) the chain is Extracellular. A helical membrane pass occupies residues 273-292 (ASAVMYTAVTPMLNPFIYSL). The Cytoplasmic segment spans residues 293 to 313 (RNRDLKGALRKLVNRKITSSS).

This sequence belongs to the G-protein coupled receptor 1 family.

Its subcellular location is the cell membrane. In terms of biological role, odorant receptor. The sequence is that of Olfactory receptor 1M1 from Homo sapiens (Human).